The chain runs to 123 residues: uncharacterized protein (123 aa).

Residues Gly5–Tyr25 traverse the membrane as a helical segment. Positions Pro33–His54 are disordered. Over residues Val35–Pro47 the composition is skewed to pro residues.

Belongs to the asfivirus CP123L family.

The protein resides in the host membrane. Its subcellular location is the virion. This is an uncharacterized protein from African swine fever virus (isolate Warthog/Namibia/Wart80/1980) (ASFV).